The following is an 872-amino-acid chain: Alanine--tRNA ligase (872 aa).

Zn(2+)-binding residues include His-567, His-571, Cys-669, and His-673.

It belongs to the class-II aminoacyl-tRNA synthetase family. It depends on Zn(2+) as a cofactor.

The protein localises to the cytoplasm. It carries out the reaction tRNA(Ala) + L-alanine + ATP = L-alanyl-tRNA(Ala) + AMP + diphosphate. Functionally, catalyzes the attachment of alanine to tRNA(Ala) in a two-step reaction: alanine is first activated by ATP to form Ala-AMP and then transferred to the acceptor end of tRNA(Ala). Also edits incorrectly charged Ser-tRNA(Ala) and Gly-tRNA(Ala) via its editing domain. The polypeptide is Alanine--tRNA ligase (Streptococcus agalactiae serotype V (strain ATCC BAA-611 / 2603 V/R)).